Consider the following 37-residue polypeptide: WNPFKELERAGQRVRDAVISAAPAVATVGQAAAIARG.

The residue at position 37 (Gly37) is a Glycine amide.

Belongs to the cecropin family.

The protein resides in the secreted. In terms of biological role, cecropins have lytic and antibacterial activity against several Gram-positive and Gram-negative bacteria. This chain is Bactericidin B-2, found in Manduca sexta (Tobacco hawkmoth).